We begin with the raw amino-acid sequence, 466 residues long: Alpha-galacturonidase (466 aa).

Position 11–78 (11–78 (VKIAYIGGGS…GKWNYETANT (68 aa))) interacts with NAD(+). N157 contributes to the substrate binding site. Residue C179 coordinates Mn(2+). The active-site Proton donor is the H180. Position 216 (H216) interacts with Mn(2+).

This sequence belongs to the glycosyl hydrolase 4 family. Homotetramer. NAD(+) is required as a cofactor. Requires Mn(2+) as cofactor.

The catalysed reaction is [(1-&gt;4)-alpha-D-galacturonosyl](n) + H2O = alpha-D-galacturonate + [(1-&gt;4)-alpha-D-galacturonosyl](n-1). Its function is as follows. Alpha-galacturonidase able to catalyze the hydrolysis of the chromogenic substrate p-nitrophenyl-alpha-D-galacturonic acid (pNPalphaGalUA). It is probable that alpha-1,4-di-galacturonate (GalUA(2)) is the naturally occurring substrate. This chain is Alpha-galacturonidase, found in Lachnoclostridium phytofermentans (strain ATCC 700394 / DSM 18823 / ISDg) (Clostridium phytofermentans).